The primary structure comprises 216 residues: Large ribosomal subunit protein uL24m (216 aa).

Residues methionine 1–leucine 9 constitute a mitochondrion transit peptide. Position 24 is a phosphoserine (serine 24). Positions leucine 56–glutamate 89 constitute a KOW domain.

Belongs to the universal ribosomal protein uL24 family. In terms of assembly, component of the mitochondrial ribosome large subunit (39S) which comprises a 16S rRNA and about 50 distinct proteins.

Its subcellular location is the mitochondrion. The chain is Large ribosomal subunit protein uL24m (MRPL24) from Bos taurus (Bovine).